The primary structure comprises 427 residues: Peptidase B (427 aa).

Positions 195 and 200 each coordinate Mn(2+). K207 is a catalytic residue. Mn(2+)-binding residues include D218, D277, and E279. R281 is a catalytic residue.

It belongs to the peptidase M17 family. As to quaternary structure, homohexamer. The cofactor is Mn(2+).

The protein resides in the cytoplasm. The enzyme catalyses Release of an N-terminal amino acid, Xaa, from a peptide or arylamide. Xaa is preferably Glu or Asp but may be other amino acids, including Leu, Met, His, Cys and Gln.. Functionally, probably plays an important role in intracellular peptide degradation. The polypeptide is Peptidase B (Salmonella choleraesuis (strain SC-B67)).